A 492-amino-acid chain; its full sequence is Probable glycogen synthase 2 (492 aa).

Lysine 15 is a binding site for ADP-alpha-D-glucose.

The protein belongs to the glycosyltransferase 1 family. Bacterial/plant glycogen synthase subfamily.

It carries out the reaction [(1-&gt;4)-alpha-D-glucosyl](n) + ADP-alpha-D-glucose = [(1-&gt;4)-alpha-D-glucosyl](n+1) + ADP + H(+). It functions in the pathway glycan biosynthesis; glycogen biosynthesis. Synthesizes alpha-1,4-glucan chains using ADP-glucose. In Nostoc sp. (strain PCC 7120 / SAG 25.82 / UTEX 2576), this protein is Probable glycogen synthase 2 (glgA2).